A 516-amino-acid chain; its full sequence is Cytochrome P450 monooxygenase asR2 (516 aa).

Residues 9–29 (LNSITFSLLVFLGFVGVSQLI) traverse the membrane as a helical segment. Residues N248 and N273 are each glycosylated (N-linked (GlcNAc...) asparagine). C461 is a binding site for heme.

The protein belongs to the cytochrome P450 family. The cofactor is heme.

The protein localises to the membrane. Its pathway is secondary metabolite biosynthesis; terpenoid biosynthesis. Cytochrome P450 monooxygenase; part of the gene cluster that mediates the biosynthesis of xenovulene A, an unusual meroterpenoid that has potent inhibitory effects on the human gamma-aminobutyrate A (GABAA) benzodiazepine receptor. The first step of xenovulene A biosynthesis is the biosynthesis of 3-methylorcinaldehyde performed by the non-reducing polyketide synthase aspks1. The salicylate hydroxylase asL1 then catalyzes the oxidative dearomatization of 3-methylorcinaldehyde to yield a dearomatized hydroxycyclohexadione. The 2-oxoglutarate-dependent dioxygenase asL3 further catalyzes the oxidative ring expansion to provide the first tropolone metabolite. The cytochrome P450 monooxygenase asR2 allows the synthesis of tropolone hemiacetal. In parallel, a previously unrecognised class of terpene cyclase, asR6, produces alpha-humulene from farnesylpyrophosphate (FPP). The putative Diels-Alderase asR5 probably catalyzes the formation of the tropolone-humulene skeleton by linking humulene and the polyketide moiety. Oxidative-ring contractions catalyzed by asL4 and asL6 then processively remove carbon atoms from the polyketide to yield xenovulene A. The chain is Cytochrome P450 monooxygenase asR2 from Sarocladium schorii (Acremonium strictum (strain IMI 501407)).